Reading from the N-terminus, the 1316-residue chain is MLDVNFFDELRIGLATAEDIRQWSYGEVKKPETINYRTLKPEKDGLFCEKIFGPTRDWECYCGKYKRVRFKGIICERCGVEVTRAKVRRERMGHIELAAPVTHIWYFKGVPSRLGYLLDLAPKDLEKIIYFAAYVITSVDNEMRHNELSTLEAEMMVERKAVEDQRDADLEARAQKLEADLAELEAEGAKADARRKVRDSGEREMRQLRDRAQRELDRLEDIWSTFTKLAPKQLIVDENLYRELQDRYGEYFTGAMGAESIQKLIETFDIDAEAEILRDVIRNGKGQKKLRALKRLKVVAAFQQSGNSPMGMVLDAVPVIPPELRPMVQLDGGRFATSDLNDLYRRVINRNNRLKRLIDLGAPEIIVNNEKRMLQESVDALFDNGRRGRPVTGPGNRPLKSLSDLLKGKQGRFRQNLLGKRVDYSGRSVIVVGPQLKLHQCGLPKLMALELFKPFVMKRLVDLNHAQNIKSAKRMVERQRPQVWDVLEEVIAEHPVLLNRAPTLHRLGIQAFEPMLVEGKAIQLHPLVCEAFNADFDGDQMAVHLPLSAEAQAEARILMLSSNNILSPASGRPLAMPRLDMVTGLYYLTTEVEGDKGAYQPAGQDSPETGVYSSPAEAIMAADRGVLSVRAKIKVRLTQLRPPAEIEDALFGHNGWQPGDAWTAETTLGRVLFNELLPLGYAFVNKQMHKKVQAAIINDLAERYPMIVVAQTVDKLKDSGFYWATRSGVTVSMADVLVPPRKKEILDSYEERAEKVEKQFQRGALNHDERNEALVEIWKEATDEVGQALREHYPADNPIITIVDSGATGNFTQTRTLAGMKGLVTNPKGEFIPRPIKSSFREGLTVLEYFINTHGARKGLADTALRTADSGYLTRRLVDVSQDVIVREHDCQTERGIMVELAERQGDGTLIRDPYIETSAYARTLGADAVDEAGNVVVARGEDLGDPEIEACLAAGITQVKVRSVLTCTTGTGVCATCYGRSMATGKLVDIGEAVGIVAAQSIGEPGTQLTMRTFHQGGVGEDITGGLPRVQELFEARVPRGKAPIADVTGRVRLEDGERFYKITIVPDDGGEEVVYDKLSKRQRLRVFKHEDGSERVLSDGDHVEVGQQLMEGSADPHEVLRVQGPREVQIHLVREVQEVYRAQGVSIHDKHIEVIVRQMLRRVTIIDSGATEFLPGSLIDRAEFEAENRRVVAESGEPAAGRPVLMGITKASLATDSWLSAASFQETTRVLTDAAINCRSDKLNGLKENVIIGKLIPAGTGINRYRNIAVQPTEEARAAAYTIPSYEDQYYSPDFGQATGAAVPLDDYGYSDYR.

Cys60, Cys62, Cys75, and Cys78 together coordinate Zn(2+). 3 residues coordinate Mg(2+): Asp535, Asp537, and Asp539. Zn(2+) is bound by residues Cys891, Cys968, Cys975, and Cys978.

The protein belongs to the RNA polymerase beta' chain family. In terms of assembly, the RNAP catalytic core consists of 2 alpha, 1 beta, 1 beta' and 1 omega subunit. When a sigma factor is associated with the core the holoenzyme is formed, which can initiate transcription. The cofactor is Mg(2+). Zn(2+) is required as a cofactor.

It carries out the reaction RNA(n) + a ribonucleoside 5'-triphosphate = RNA(n+1) + diphosphate. Its function is as follows. DNA-dependent RNA polymerase catalyzes the transcription of DNA into RNA using the four ribonucleoside triphosphates as substrates. The polypeptide is DNA-directed RNA polymerase subunit beta' (Mycobacterium marinum (strain ATCC BAA-535 / M)).